The primary structure comprises 124 residues: MNNVLFVALGGSIGAVLRYLISLLMLQVFGSGFPFGTLVVNILGSFLMGVIFALGQVSELSPEFKAFIGVGMLGALTTFSTFSNETLLLMQQGYLVKAVFNVVVNVGVCIFVVYLGQQLVFSRF.

Helical transmembrane passes span 4–24, 35–55, 62–82, and 95–115; these read VLFVALGGSIGAVLRYLISLL, FGTLVVNILGSFLMGVIFALG, PEFKAFIGVGMLGALTTFSTF, and LVKAVFNVVVNVGVCIFVVYL. Residues Gly74 and Thr77 each coordinate Na(+).

This sequence belongs to the fluoride channel Fluc/FEX (TC 1.A.43) family.

It is found in the cell inner membrane. The enzyme catalyses fluoride(in) = fluoride(out). Na(+) is not transported, but it plays an essential structural role and its presence is essential for fluoride channel function. Its function is as follows. Fluoride-specific ion channel. Important for reducing fluoride concentration in the cell, thus reducing its toxicity. This chain is Fluoride-specific ion channel FluC, found in Shewanella pealeana (strain ATCC 700345 / ANG-SQ1).